A 244-amino-acid polypeptide reads, in one-letter code: tRNA (guanine-N(7)-)-methyltransferase (244 aa).

S-adenosyl-L-methionine is bound by residues Glu75, Glu100, Asp127, and Asp150. Asp150 is a catalytic residue. Residues Lys154, Asp186, and 223–226 (TRFE) each bind substrate.

This sequence belongs to the class I-like SAM-binding methyltransferase superfamily. TrmB family.

It catalyses the reaction guanosine(46) in tRNA + S-adenosyl-L-methionine = N(7)-methylguanosine(46) in tRNA + S-adenosyl-L-homocysteine. It participates in tRNA modification; N(7)-methylguanine-tRNA biosynthesis. In terms of biological role, catalyzes the formation of N(7)-methylguanine at position 46 (m7G46) in tRNA. This Xylella fastidiosa (strain M23) protein is tRNA (guanine-N(7)-)-methyltransferase.